Reading from the N-terminus, the 500-residue chain is Cytochrome P450 71B9 (500 aa).

The helical transmembrane segment at 1 to 21 (MATIWFLSLLFLCCILLAAFK) threads the bilayer. Cys440 is a binding site for heme.

The protein belongs to the cytochrome P450 family. Heme is required as a cofactor.

It is found in the membrane. The protein is Cytochrome P450 71B9 (CYP71B9) of Arabidopsis thaliana (Mouse-ear cress).